The chain runs to 988 residues: Bifunctional glutamine synthetase adenylyltransferase/adenylyl-removing enzyme (988 aa).

The adenylyl removase stretch occupies residues 1–474; sequence MSSSAIDADI…HYSKLFEGDP (474 aa). The adenylyl transferase stretch occupies residues 480 to 988; that stretch reads LPIDYAGGAE…FNRLIGGNGE (509 aa).

It belongs to the GlnE family. Mg(2+) is required as a cofactor.

The catalysed reaction is [glutamine synthetase]-O(4)-(5'-adenylyl)-L-tyrosine + phosphate = [glutamine synthetase]-L-tyrosine + ADP. It carries out the reaction [glutamine synthetase]-L-tyrosine + ATP = [glutamine synthetase]-O(4)-(5'-adenylyl)-L-tyrosine + diphosphate. Its function is as follows. Involved in the regulation of glutamine synthetase GlnA, a key enzyme in the process to assimilate ammonia. When cellular nitrogen levels are high, the C-terminal adenylyl transferase (AT) inactivates GlnA by covalent transfer of an adenylyl group from ATP to specific tyrosine residue of GlnA, thus reducing its activity. Conversely, when nitrogen levels are low, the N-terminal adenylyl removase (AR) activates GlnA by removing the adenylyl group by phosphorolysis, increasing its activity. The regulatory region of GlnE binds the signal transduction protein PII (GlnB) which indicates the nitrogen status of the cell. The protein is Bifunctional glutamine synthetase adenylyltransferase/adenylyl-removing enzyme of Rhodopseudomonas palustris (strain HaA2).